The sequence spans 434 residues: Alpha-enolase (434 aa).

Ser2 carries the post-translational modification N-acetylserine. Lys5 carries the post-translational modification N6-acetyllysine. Ser27 is modified (phosphoserine). Ser40 contacts Mg(2+). Tyr44 bears the Phosphotyrosine mark. Lys60 bears the N6-acetyllysine; alternate mark. Lys60 carries the post-translational modification N6-succinyllysine; alternate. 2 positions are modified to N6-acetyllysine: Lys64 and Lys71. An N6-acetyllysine; alternate modification is found at Lys89. Lys89 carries the N6-succinyllysine; alternate modification. Lys92 and Lys126 each carry N6-acetyllysine. Substrate-binding residues include His158 and Glu167. 2 positions are modified to N6-acetyllysine: Lys193 and Lys199. Lys202 is modified (N6-acetyllysine; alternate). Lys202 is covalently cross-linked (Glycyl lysine isopeptide (Lys-Gly) (interchain with G-Cter in SUMO2); alternate). Glu210 serves as the catalytic Proton donor. An N6-acetyllysine; alternate mark is found at Lys228 and Lys233. Lys228 carries the post-translational modification N6-succinyllysine; alternate. Lys228 is modified (N6-(2-hydroxyisobutyryl)lysine; alternate). N6-malonyllysine; alternate is present on Lys233. Residue Asp245 participates in Mg(2+) binding. At Ser254 the chain carries Phosphoserine. Lys256 carries the post-translational modification N6-acetyllysine. Ser263 and Ser272 each carry phosphoserine. Position 281 is an N6-acetyllysine; alternate (Lys281). N6-(2-hydroxyisobutyryl)lysine; alternate is present on Lys281. Position 285 is an N6-acetyllysine (Lys285). Position 287 is a phosphotyrosine (Tyr287). At Ser291 the chain carries Phosphoserine. Mg(2+) contacts are provided by Glu293 and Asp318. The substrate site is built by Glu293 and Asp318. An N6-acetyllysine mark is found at Lys335 and Lys343. Residue Lys343 is the Proton acceptor of the active site. Residues 370–373 and Lys394 contribute to the substrate site; that span reads SHRS. The tract at residues 405 to 434 is required for interaction with PLG; sequence AKYNQLLRIEEELGSKAKFAGRNFRNPLAK. Lys406 carries the post-translational modification N6-acetyllysine. Lys420 is subject to N6-acetyllysine; alternate. Lys420 carries the N6-succinyllysine; alternate modification. Lys420 carries the post-translational modification N6-malonyllysine; alternate.

The protein belongs to the enolase family. In terms of assembly, mammalian enolase is composed of 3 isozyme subunits, alpha, beta and gamma, which can form homodimers or heterodimers which are cell-type and development-specific. ENO1 interacts with PLG in the neuronal plasma membrane and promotes its activation. The C-terminal lysine is required for this binding. Interacts with ENO4 and PGAM2. Interacts with CMTM6. Mg(2+) is required as a cofactor. Post-translationally, ISGylated. In terms of processing, lysine 2-hydroxyisobutyrylation (Khib) by p300/EP300 activates the phosphopyruvate hydratase activity.

It localises to the cytoplasm. Its subcellular location is the cell membrane. The enzyme catalyses (2R)-2-phosphoglycerate = phosphoenolpyruvate + H2O. It functions in the pathway carbohydrate degradation; glycolysis; pyruvate from D-glyceraldehyde 3-phosphate: step 4/5. Functionally, glycolytic enzyme the catalyzes the conversion of 2-phosphoglycerate to phosphoenolpyruvate. In addition to glycolysis, involved in various processes such as growth control, hypoxia tolerance and allergic responses. May also function in the intravascular and pericellular fibrinolytic system due to its ability to serve as a receptor and activator of plasminogen on the cell surface of several cell-types such as leukocytes and neurons. Stimulates immunoglobulin production. The chain is Alpha-enolase (ENO1) from Macaca fascicularis (Crab-eating macaque).